The sequence spans 614 residues: Chaperone protein DnaK (614 aa).

Phosphothreonine; by autocatalysis is present on Thr173. 2 stretches are compositionally biased toward basic and acidic residues: residues 490 to 509 (EENAEADKKRREESDLRNEA) and 529 to 542 (EEDKQNAEDKKEAL). Disordered regions lie at residues 490–510 (EENAEADKKRREESDLRNEAD), 524–555 (GENISEEDKQNAEDKKEALKSALEGEDIDDIK), and 575–614 (QAAQAQQQAQGEDANASQDSNVEDADFKEVKDDDNQDNQK). The segment covering 575-584 (QAAQAQQQAQ) has biased composition (low complexity). Positions 599-614 (ADFKEVKDDDNQDNQK) are enriched in basic and acidic residues.

The protein belongs to the heat shock protein 70 family.

In terms of biological role, acts as a chaperone. The polypeptide is Chaperone protein DnaK (Staphylococcus saprophyticus subsp. saprophyticus (strain ATCC 15305 / DSM 20229 / NCIMB 8711 / NCTC 7292 / S-41)).